Consider the following 161-residue polypeptide: Probable chemoreceptor glutamine deamidase CheD (161 aa).

Belongs to the CheD family.

It catalyses the reaction L-glutaminyl-[protein] + H2O = L-glutamyl-[protein] + NH4(+). In terms of biological role, probably deamidates glutamine residues to glutamate on methyl-accepting chemotaxis receptors (MCPs), playing an important role in chemotaxis. The polypeptide is Probable chemoreceptor glutamine deamidase CheD (Lachnoclostridium phytofermentans (strain ATCC 700394 / DSM 18823 / ISDg) (Clostridium phytofermentans)).